A 399-amino-acid polypeptide reads, in one-letter code: S-adenosylmethionine synthase (399 aa).

His17 is an ATP binding site. Asp19 is a binding site for Mg(2+). Glu45 contacts K(+). L-methionine is bound by residues Glu58 and Gln101. The segment at 101-111 is flexible loop; the sequence is QSPDIAQGVDE. ATP-binding positions include 177-179, 244-245, Asp253, 259-260, Ala276, and Lys280; these read DAK, RF, and RK. Asp253 is a binding site for L-methionine. Lys284 is a binding site for L-methionine.

This sequence belongs to the AdoMet synthase family. In terms of assembly, homotetramer; dimer of dimers. Requires Mg(2+) as cofactor. It depends on K(+) as a cofactor.

Its subcellular location is the cytoplasm. It carries out the reaction L-methionine + ATP + H2O = S-adenosyl-L-methionine + phosphate + diphosphate. Its pathway is amino-acid biosynthesis; S-adenosyl-L-methionine biosynthesis; S-adenosyl-L-methionine from L-methionine: step 1/1. Its function is as follows. Catalyzes the formation of S-adenosylmethionine (AdoMet) from methionine and ATP. The overall synthetic reaction is composed of two sequential steps, AdoMet formation and the subsequent tripolyphosphate hydrolysis which occurs prior to release of AdoMet from the enzyme. The polypeptide is S-adenosylmethionine synthase (Listeria welshimeri serovar 6b (strain ATCC 35897 / DSM 20650 / CCUG 15529 / CIP 8149 / NCTC 11857 / SLCC 5334 / V8)).